The following is a 123-amino-acid chain: Small ribosomal subunit protein uS12 (123 aa).

Asp-89 bears the 3-methylthioaspartic acid mark.

Belongs to the universal ribosomal protein uS12 family. Part of the 30S ribosomal subunit. Contacts proteins S8 and S17. May interact with IF1 in the 30S initiation complex.

Its function is as follows. With S4 and S5 plays an important role in translational accuracy. Interacts with and stabilizes bases of the 16S rRNA that are involved in tRNA selection in the A site and with the mRNA backbone. Located at the interface of the 30S and 50S subunits, it traverses the body of the 30S subunit contacting proteins on the other side and probably holding the rRNA structure together. The combined cluster of proteins S8, S12 and S17 appears to hold together the shoulder and platform of the 30S subunit. The polypeptide is Small ribosomal subunit protein uS12 (Chelativorans sp. (strain BNC1)).